The primary structure comprises 241 residues: Oil body-associated protein 1B (241 aa).

The span at 1-12 shows a compositional bias: polar residues; sequence MEKAVHSSTTSG. Positions 1-22 are disordered; sequence MEKAVHSSTTSGPAVPGETTKT.

This sequence belongs to the OBAP family.

The chain is Oil body-associated protein 1B from Arabidopsis thaliana (Mouse-ear cress).